A 377-amino-acid polypeptide reads, in one-letter code: Chaperone protein DnaJ (377 aa).

The J domain occupies 5-69 (DYYEVLGISK…QKRAQYDQYG (65 aa)). Residues 134–216 (GKDAEIEIPR…CHGKGRVTKT (83 aa)) form a CR-type zinc finger. Zn(2+) contacts are provided by cysteine 147, cysteine 150, cysteine 164, cysteine 167, cysteine 190, cysteine 193, cysteine 204, and cysteine 207. CXXCXGXG motif repeat units lie at residues 147-154 (CDTCHGSG), 164-171 (CSHCGGKG), 190-197 (CQYCNGTG), and 204-211 (CPTCHGKG).

This sequence belongs to the DnaJ family. In terms of assembly, homodimer. It depends on Zn(2+) as a cofactor.

The protein localises to the cytoplasm. Its function is as follows. Participates actively in the response to hyperosmotic and heat shock by preventing the aggregation of stress-denatured proteins and by disaggregating proteins, also in an autonomous, DnaK-independent fashion. Unfolded proteins bind initially to DnaJ; upon interaction with the DnaJ-bound protein, DnaK hydrolyzes its bound ATP, resulting in the formation of a stable complex. GrpE releases ADP from DnaK; ATP binding to DnaK triggers the release of the substrate protein, thus completing the reaction cycle. Several rounds of ATP-dependent interactions between DnaJ, DnaK and GrpE are required for fully efficient folding. Also involved, together with DnaK and GrpE, in the DNA replication of plasmids through activation of initiation proteins. The chain is Chaperone protein DnaJ from Listeria monocytogenes serotype 1/2a (strain 10403S).